A 405-amino-acid chain; its full sequence is L-carnitine CoA-transferase (405 aa).

CoA contacts are provided by lysine 97 and arginine 104. Residue aspartate 169 is the Nucleophile of the active site.

Belongs to the CoA-transferase III family. CaiB subfamily. As to quaternary structure, homodimer.

The protein resides in the cytoplasm. The enzyme catalyses crotonobetainyl-CoA + (R)-carnitine = crotonobetaine + (R)-carnitinyl-CoA. It catalyses the reaction 4-(trimethylamino)butanoyl-CoA + (R)-carnitine = (R)-carnitinyl-CoA + 4-(trimethylamino)butanoate. It functions in the pathway amine and polyamine metabolism; carnitine metabolism. Functionally, catalyzes the reversible transfer of the CoA moiety from gamma-butyrobetainyl-CoA to L-carnitine to generate L-carnitinyl-CoA and gamma-butyrobetaine. Is also able to catalyze the reversible transfer of the CoA moiety from gamma-butyrobetainyl-CoA or L-carnitinyl-CoA to crotonobetaine to generate crotonobetainyl-CoA. This chain is L-carnitine CoA-transferase, found in Escherichia coli O17:K52:H18 (strain UMN026 / ExPEC).